Here is a 438-residue protein sequence, read N- to C-terminus: Na(+)/H(+) antiporter NhaA (438 aa).

The next 11 helical transmembrane spans lie at 23-43 (FGGI…NSFL), 62-82 (FFIG…LFFL), 104-124 (SFPV…YFFL), 133-153 (GFGI…MLLG), 162-182 (VFLI…IALF), 185-205 (TNLK…LAIL), 212-232 (SLIP…QSGI), 302-322 (FLAP…NAGV), 337-357 (LGVI…ITFI), 372-392 (WWHI…SMFI), and 410-430 (IAIL…LFAL).

It belongs to the NhaA Na(+)/H(+) (TC 2.A.33) antiporter family.

The protein resides in the cell inner membrane. It catalyses the reaction Na(+)(in) + 2 H(+)(out) = Na(+)(out) + 2 H(+)(in). Functionally, na(+)/H(+) antiporter that extrudes sodium in exchange for external protons. This chain is Na(+)/H(+) antiporter NhaA, found in Helicobacter pylori (strain J99 / ATCC 700824) (Campylobacter pylori J99).